The following is a 172-amino-acid chain: uncharacterized protein (172 aa).

The next 3 helical transmembrane spans lie at 7–27, 59–79, and 89–109; these read ILIS…CYGI, LMIF…LYLF, and FSLT…LFVK.

It to M.jannaschii MJ0695.

It is found in the cell membrane. This is an uncharacterized protein from Methanocaldococcus jannaschii (strain ATCC 43067 / DSM 2661 / JAL-1 / JCM 10045 / NBRC 100440) (Methanococcus jannaschii).